Reading from the N-terminus, the 141-residue chain is Large ribosomal subunit protein uL11 (141 aa).

It belongs to the universal ribosomal protein uL11 family. As to quaternary structure, part of the ribosomal stalk of the 50S ribosomal subunit. Interacts with L10 and the large rRNA to form the base of the stalk. L10 forms an elongated spine to which L12 dimers bind in a sequential fashion forming a multimeric L10(L12)X complex. One or more lysine residues are methylated.

In terms of biological role, forms part of the ribosomal stalk which helps the ribosome interact with GTP-bound translation factors. The polypeptide is Large ribosomal subunit protein uL11 (Nostoc punctiforme (strain ATCC 29133 / PCC 73102)).